Reading from the N-terminus, the 161-residue chain is Endoribonuclease YbeY (161 aa).

Zn(2+) contacts are provided by histidine 120, histidine 124, and aspartate 130.

Belongs to the endoribonuclease YbeY family. It depends on Zn(2+) as a cofactor.

It is found in the cytoplasm. In terms of biological role, single strand-specific metallo-endoribonuclease involved in late-stage 70S ribosome quality control and in maturation of the 3' terminus of the 16S rRNA. This chain is Endoribonuclease YbeY, found in Chlamydia trachomatis serovar L2 (strain ATCC VR-902B / DSM 19102 / 434/Bu).